We begin with the raw amino-acid sequence, 461 residues long: Cytochrome c biogenesis protein CcsB (461 aa).

3 helical membrane passes run 32-52, 91-111, and 178-198; these read LRLAIALLLIIALFSISGTVI, TWWFLSLLVLFGTSLTACTFT, and IGPIIVHIGIVTILLGSIWGA.

It belongs to the Ccs1/CcsB family. In terms of assembly, may interact with CcsA.

The protein localises to the cellular thylakoid membrane. In terms of biological role, required during biogenesis of c-type cytochromes (cytochrome c6 and cytochrome f) at the step of heme attachment. This chain is Cytochrome c biogenesis protein CcsB, found in Nostoc sp. (strain PCC 7120 / SAG 25.82 / UTEX 2576).